Here is a 110-residue protein sequence, read N- to C-terminus: Chagasin (110 aa).

A BC loop motif is present at residues 29-34 (NPTTGF). Residues 59-68 (PPDSKLLGAG) carry the DE loop motif. An FG loop motif is present at residues 91–100 (RPWTGPSHDS).

Belongs to the protease inhibitor I42 family. Interacts with cruzipain.

Its subcellular location is the flagellar pocket. The protein resides in the cytoplasmic vesicle. It localises to the cell surface. In terms of biological role, cysteine protease inhibitor. Inhibits cysteine protease cruzipain. The chain is Chagasin (cha) from Trypanosoma cruzi.